Here is a 248-residue protein sequence, read N- to C-terminus: Coenzyme F420:L-glutamate ligase (248 aa).

GTP-binding positions include 15 to 18, 45 to 46, and Lys50; these read IPLI and ET. Residue Asp115 participates in a divalent metal cation binding. GTP is bound at residue Asn118. A divalent metal cation contacts are provided by Asp155, Ser156, and Gln213. Position 211 to 218 (211 to 218) interacts with GTP; the sequence is MGQSNEGI.

Belongs to the CofE family. In terms of assembly, homodimer. Mg(2+) serves as cofactor. The cofactor is Mn(2+). It depends on K(+) as a cofactor.

The enzyme catalyses oxidized coenzyme F420-0 + GTP + L-glutamate = oxidized coenzyme F420-1 + GDP + phosphate + H(+). The catalysed reaction is oxidized coenzyme F420-1 + GTP + L-glutamate = oxidized coenzyme F420-2 + GDP + phosphate + H(+). It participates in cofactor biosynthesis; coenzyme F420 biosynthesis. In terms of biological role, catalyzes the GTP-dependent successive addition of two or more gamma-linked L-glutamates to the L-lactyl phosphodiester of 7,8-didemethyl-8-hydroxy-5-deazariboflavin (F420-0) to form coenzyme F420-0-glutamyl-glutamate (F420-2) or polyglutamated F420 derivatives. The polypeptide is Coenzyme F420:L-glutamate ligase (Methanococcus maripaludis (strain C7 / ATCC BAA-1331)).